Consider the following 395-residue polypeptide: Sulfate adenylyltransferase (395 aa).

It belongs to the sulfate adenylyltransferase family.

It carries out the reaction sulfate + ATP + H(+) = adenosine 5'-phosphosulfate + diphosphate. Its pathway is sulfur metabolism; hydrogen sulfide biosynthesis; sulfite from sulfate: step 1/3. In Synechococcus elongatus (strain ATCC 33912 / PCC 7942 / FACHB-805) (Anacystis nidulans R2), this protein is Sulfate adenylyltransferase.